Here is a 511-residue protein sequence, read N- to C-terminus: Phosphomethylpyrimidine synthase (511 aa).

Substrate contacts are provided by residues Asn-127, Met-156, Tyr-185, His-221, 241–243 (SRG), 282–285 (DGLR), and Glu-321. Residue His-325 participates in Zn(2+) binding. Residue Tyr-348 coordinates substrate. His-389 serves as a coordination point for Zn(2+). Residues Cys-469, Cys-472, and Cys-477 each coordinate [4Fe-4S] cluster. The tract at residues 492–511 (KGMEEKSEVTICNRKKESGK) is disordered.

The protein belongs to the ThiC family. [4Fe-4S] cluster is required as a cofactor.

The catalysed reaction is 5-amino-1-(5-phospho-beta-D-ribosyl)imidazole + S-adenosyl-L-methionine = 4-amino-2-methyl-5-(phosphooxymethyl)pyrimidine + CO + 5'-deoxyadenosine + formate + L-methionine + 3 H(+). Its pathway is cofactor biosynthesis; thiamine diphosphate biosynthesis. In terms of biological role, catalyzes the synthesis of the hydroxymethylpyrimidine phosphate (HMP-P) moiety of thiamine from aminoimidazole ribotide (AIR) in a radical S-adenosyl-L-methionine (SAM)-dependent reaction. This is Phosphomethylpyrimidine synthase from Leptospira borgpetersenii serovar Hardjo-bovis (strain JB197).